Consider the following 336-residue polypeptide: Biotin synthase (336 aa).

One can recognise a Radical SAM core domain in the interval 54-281; the sequence is NAIQLSTLLS…KAMVRLSAGR (228 aa). Residues cysteine 69, cysteine 73, and cysteine 76 each contribute to the [4Fe-4S] cluster site. [2Fe-2S] cluster is bound by residues cysteine 113, cysteine 144, cysteine 204, and arginine 276.

The protein belongs to the radical SAM superfamily. Biotin synthase family. In terms of assembly, homodimer. [4Fe-4S] cluster is required as a cofactor. [2Fe-2S] cluster serves as cofactor.

It catalyses the reaction (4R,5S)-dethiobiotin + (sulfur carrier)-SH + 2 reduced [2Fe-2S]-[ferredoxin] + 2 S-adenosyl-L-methionine = (sulfur carrier)-H + biotin + 2 5'-deoxyadenosine + 2 L-methionine + 2 oxidized [2Fe-2S]-[ferredoxin]. Its pathway is cofactor biosynthesis; biotin biosynthesis; biotin from 7,8-diaminononanoate: step 2/2. Its function is as follows. Catalyzes the conversion of dethiobiotin (DTB) to biotin by the insertion of a sulfur atom into dethiobiotin via a radical-based mechanism. The chain is Biotin synthase from Burkholderia pseudomallei (strain 1710b).